We begin with the raw amino-acid sequence, 1162 residues long: Paired amphipathic helix protein Sin3-like 5 (1162 aa).

Residues 1–37 (MKRVREEVYVEPQMRGPTVSSRGETNGRPSTISGGGT) form a disordered region. Over residues 18–30 (TVSSRGETNGRPS) the composition is skewed to polar residues. 2 PAH domains span residues 28-109 (RPST…LPKG) and 123-193 (KPVD…LPDF). Disordered regions lie at residues 702 to 727 (RVSD…ESCE), 743 to 779 (QKLP…DDDN), 803 to 830 (GGQV…SNEG), and 1121 to 1143 (KKAT…ELSR). Ser817 is modified (phosphoserine). Polar residues predominate over residues 1123 to 1139 (ATLNPTGPENVKTSDSS).

It is found in the nucleus. Functionally, acts as a transcriptional repressor. Plays roles in regulating gene expression and genome stability. The sequence is that of Paired amphipathic helix protein Sin3-like 5 (SNL5) from Arabidopsis thaliana (Mouse-ear cress).